A 254-amino-acid chain; its full sequence is Putative biopolymer transport protein ExbB-like 1 (254 aa).

Helical transmembrane passes span 39-59 (GGVV…TAFE), 141-161 (LETI…TGLI), and 185-205 (IGEA…ALLV).

This sequence belongs to the ExbB/TolQ family.

It is found in the cell inner membrane. Functionally, involved in the TonB-dependent energy-dependent transport of various receptor-bound substrates. Protects ExbD from proteolytic degradation and functionally stabilizes TonB. This chain is Putative biopolymer transport protein ExbB-like 1, found in Synechocystis sp. (strain ATCC 27184 / PCC 6803 / Kazusa).